Here is a 225-residue protein sequence, read N- to C-terminus: Lipoprotein-releasing system ATP-binding protein LolD (225 aa).

In terms of domain architecture, ABC transporter spans 5–225 (LEVMDLTKGY…RLVDGRVVAD (221 aa)). Residue 41-48 (GASGTGKS) coordinates ATP.

This sequence belongs to the ABC transporter superfamily. Lipoprotein translocase (TC 3.A.1.125) family. In terms of assembly, the complex is composed of two ATP-binding proteins (LolD) and two transmembrane proteins (LolC and LolE).

The protein resides in the cell inner membrane. Part of the ABC transporter complex LolCDE involved in the translocation of mature outer membrane-directed lipoproteins, from the inner membrane to the periplasmic chaperone, LolA. Responsible for the formation of the LolA-lipoprotein complex in an ATP-dependent manner. In Geobacter metallireducens (strain ATCC 53774 / DSM 7210 / GS-15), this protein is Lipoprotein-releasing system ATP-binding protein LolD.